The primary structure comprises 93 residues: Integration host factor subunit beta (93 aa).

Belongs to the bacterial histone-like protein family. In terms of assembly, heterodimer of an alpha and a beta chain.

Its function is as follows. This protein is one of the two subunits of integration host factor, a specific DNA-binding protein that functions in genetic recombination as well as in transcriptional and translational control. The polypeptide is Integration host factor subunit beta (Rhodospirillum centenum (strain ATCC 51521 / SW)).